An 83-amino-acid polypeptide reads, in one-letter code: Putative defensin-like protein 150 (83 aa).

Positions 1-25 (MMGKHIQLSFAILIMFTIFVLGAVG) are cleaved as a signal peptide. Cystine bridges form between Cys-35–Cys-83, Cys-44–Cys-64, Cys-49–Cys-77, and Cys-53–Cys-79.

The protein belongs to the DEFL family.

The protein resides in the secreted. The sequence is that of Putative defensin-like protein 150 (LCR32) from Arabidopsis thaliana (Mouse-ear cress).